The following is a 142-amino-acid chain: Hemoglobin subunit alpha-A (142 aa).

Positions 2–142 (VLSAADKTNV…VGTVLTAKYR (141 aa)) constitute a Globin domain. O2 is bound at residue His59. His88 serves as a coordination point for heme b.

The protein belongs to the globin family. As to quaternary structure, heterotetramer of two alpha chains and two beta chains. As to expression, red blood cells.

In terms of biological role, involved in oxygen transport from the lung to the various peripheral tissues. This Anser indicus (Bar-headed goose) protein is Hemoglobin subunit alpha-A (HBAA).